The sequence spans 402 residues: Olfactomedin-like protein 1 (402 aa).

An N-terminal signal peptide occupies residues 1-28; that stretch reads MMVALRGASALLVLFLAAFLPPPQCTQD. N-linked (GlcNAc...) asparagine glycosylation is present at asparagine 66. The stretch at 79 to 133 forms a coiled coil; it reads SEYKSAVGNLALRVERAQREIDYIQYLREADECIESEDKTLAEMLLQEAEEEKKI. Residues asparagine 138 and asparagine 183 are each glycosylated (N-linked (GlcNAc...) asparagine). One can recognise an Olfactomedin-like domain in the interval 140–397; that stretch reads SCDNMLMGIK…QIIYKLQTKR (258 aa). Cysteine 141 and cysteine 324 are oxidised to a cystine.

Highly N-glycosylated. Mainly expressed in the small intestine, liver, lung and heart.

It is found in the secreted. The sequence is that of Olfactomedin-like protein 1 (OLFML1) from Homo sapiens (Human).